A 1564-amino-acid chain; its full sequence is NACHT domain- and WD repeat-containing protein 1 (1564 aa).

The region spanning 335–661 is the NACHT domain; it reads TPLVLFGPPG…LLAIAHRQLV (327 aa). 341–348 is an ATP binding site; that stretch reads GPPGIGKT. WD repeat units lie at residues 866–905, 908–947, 956–994, 998–1037, 1044–1082, 1083–1121, 1126–1165, 1167–1207, 1212–1251, 1253–1290, 1291–1327, 1338–1376, 1380–1418, and 1425–1462; these read GCHK…VIHM, GHTG…EKFT, PAEP…PVFH, DASD…LQGK, KEET…LLEK, LPDA…RRFM, EHED…TLLD, LEGV…RSRV, LDRT…EQDS, DTSS…RQDV, ICIP…VLDI, GPRY…LYEC, KAFP…WDLQ, and EMSY…VWSV.

May interact with HSP90AA1, HSP90AB1 and BAG2. Expressed at highest levels in prostate, followed by testis, retina, trachea and optic nerve. Also detected in brain, epididymis, lung, vagina and pituitary. In the prostate, tends to be up-regulated during malignant progression compared to normal epithelium (at protein level).

The protein resides in the cytoplasm. Its subcellular location is the cytosol. May play a role in the control of androgen receptor (AR) protein steady-state levels. The polypeptide is NACHT domain- and WD repeat-containing protein 1 (NWD1) (Homo sapiens (Human)).